A 291-amino-acid chain; its full sequence is 4-diphosphocytidyl-2-C-methyl-D-erythritol kinase (291 aa).

Lys-12 is a catalytic residue. 95 to 105 contacts ATP; the sequence is PDGGGLGGGSS. Asp-137 is an active-site residue.

This sequence belongs to the GHMP kinase family. IspE subfamily.

The enzyme catalyses 4-CDP-2-C-methyl-D-erythritol + ATP = 4-CDP-2-C-methyl-D-erythritol 2-phosphate + ADP + H(+). Its pathway is isoprenoid biosynthesis; isopentenyl diphosphate biosynthesis via DXP pathway; isopentenyl diphosphate from 1-deoxy-D-xylulose 5-phosphate: step 3/6. Functionally, catalyzes the phosphorylation of the position 2 hydroxy group of 4-diphosphocytidyl-2C-methyl-D-erythritol. The polypeptide is 4-diphosphocytidyl-2-C-methyl-D-erythritol kinase (Alkalilimnicola ehrlichii (strain ATCC BAA-1101 / DSM 17681 / MLHE-1)).